The chain runs to 231 residues: Flagellar L-ring protein (231 aa).

An N-terminal signal peptide occupies residues 1-18 (MKHLLSVFALGGAVLLAG). C19 carries the N-palmitoyl cysteine lipid modification. C19 carries S-diacylglycerol cysteine lipidation.

It belongs to the FlgH family. The basal body constitutes a major portion of the flagellar organelle and consists of four rings (L,P,S, and M) mounted on a central rod.

Its subcellular location is the cell outer membrane. It is found in the bacterial flagellum basal body. Its function is as follows. Assembles around the rod to form the L-ring and probably protects the motor/basal body from shearing forces during rotation. In Pseudomonas entomophila (strain L48), this protein is Flagellar L-ring protein.